A 298-amino-acid polypeptide reads, in one-letter code: Estradiol 17-beta-dehydrogenase 11 (298 aa).

The first 21 residues, 1 to 21, serve as a signal peptide directing secretion; it reads MKYLLDLILLLPLLIVFSIES. 40–64 is an NADP(+) binding site; that stretch reads LITGAGHGIGRLTAYEFAKLNTKLV. Ser172 is a binding site for substrate. Tyr185 acts as the Proton acceptor in catalysis.

The protein belongs to the short-chain dehydrogenases/reductases (SDR) family. 17-beta-HSD 3 subfamily. As to expression, expressed in the liver (at protein level). Also expressed in the intestine and, at much lower levels, in the kidney.

The protein resides in the endoplasmic reticulum. Its subcellular location is the lipid droplet. The catalysed reaction is 17beta-estradiol + NAD(+) = estrone + NADH + H(+). It catalyses the reaction 17beta-estradiol + NADP(+) = estrone + NADPH + H(+). Its function is as follows. Can convert androstan-3-alpha,17-beta-diol (3-alpha-diol) to androsterone in vitro, suggesting that it may participate in androgen metabolism during steroidogenesis. May act by metabolizing compounds that stimulate steroid synthesis and/or by generating metabolites that inhibit it. Has no activity toward DHEA (dehydroepiandrosterone), or A-dione (4-androste-3,17-dione), and only a slight activity toward testosterone to A-dione. The protein is Estradiol 17-beta-dehydrogenase 11 (Hsd17b11) of Mus musculus (Mouse).